The primary structure comprises 288 residues: Small ribosomal subunit protein uS2 (288 aa).

The interval 228–288 (RAGLSSDKDA…PAAEAPSTEA (61 aa)) is disordered. Positions 257–288 (QAAPAAEAAPAAEAQAAPAAEAPAAEAPSTEA) are enriched in low complexity.

It belongs to the universal ribosomal protein uS2 family.

This Rhodococcus opacus (strain B4) protein is Small ribosomal subunit protein uS2.